The sequence spans 340 residues: TPDYGHYDDKDTLDANTPVDKTSNTLRVPDILALVIFAVVFLVGVLRNALVVWVTAFEAKRTINAIWFLNLAVADFLSCLALPILFTSIVQHHHWPFGGAACRILPSLILLNMYASILLLATISADRFLLVFNPIWCQNFRGAGLAWIACAVAWGLALLLTIPSFLYRVVREEYFPPKVLCGVDHGHDKRRERAVAIARLVLGFVWPLLTLTMCYTFLLLRTWSRRATRSTKTLKVVVAVVASFFIFWLPYQVTGMMMSFLEPSSPTFLLLKKLDSLCISFAYINCCINPIIYVVAGQGFQGRLRKSLPSLLRNVLTEESMVRESKSFTRSTVDTMAQKT.

The Extracellular segment spans residues 1–30; that stretch reads TPDYGHYDDKDTLDANTPVDKTSNTLRVPD. The segment at 3-11 is required for CHIPS binding; it reads DYGHYDDKD. Residues tyrosine 4 and tyrosine 7 each carry the sulfotyrosine modification. The tract at residues 14-23 is involved in C5a binding; that stretch reads DANTPVDKTS. A helical transmembrane segment spans residues 31–57; the sequence is ILALVIFAVVFLVGVLRNALVVWVTAF. Residues 58–62 are Cytoplasmic-facing; the sequence is EAKRT. A helical transmembrane segment spans residues 63–86; it reads INAIWFLNLAVADFLSCLALPILF. The Extracellular segment spans residues 87-103; it reads TSIVQHHHWPFGGAACR. The cysteines at positions 102 and 181 are disulfide-linked. Residues 104 to 125 form a helical membrane-spanning segment; sequence ILPSLILLNMYASILLLATISA. The Cytoplasmic segment spans residues 126–146; that stretch reads DRFLLVFNPIWCQNFRGAGLA. The helical transmembrane segment at 147 to 167 threads the bilayer; the sequence is WIACAVAWGLALLLTIPSFLY. Topologically, residues 168-193 are extracellular; it reads RVVREEYFPPKVLCGVDHGHDKRRER. The chain crosses the membrane as a helical span at residues 194–219; that stretch reads AVAIARLVLGFVWPLLTLTMCYTFLL. Residues 220–235 are Cytoplasmic-facing; it reads LRTWSRRATRSTKTLK. Residues 236-258 traverse the membrane as a helical segment; it reads VVVAVVASFFIFWLPYQVTGMMM. The Extracellular segment spans residues 259-275; sequence SFLEPSSPTFLLLKKLD. Residues 276–296 form a helical membrane-spanning segment; the sequence is SLCISFAYINCCINPIIYVVA. Residues 297–340 are Cytoplasmic-facing; sequence GQGFQGRLRKSLPSLLRNVLTEESMVRESKSFTRSTVDTMAQKT. Phosphoserine is present on residues serine 307, serine 310, serine 320, serine 325, serine 327, and serine 331.

It belongs to the G-protein coupled receptor 1 family. Homodimer. May also form higher-order oligomers. Interacts (when phosphorylated) with ARRB1 and ARRB2; the interaction is associated with internalization of C5aR. Interacts (via N-terminal domain) with S.aureus chemotaxis inhibitory protein (CHIPS); the interaction blocks the receptor and may thus inhibit the immune response. In terms of processing, sulfation plays a critical role in the association of C5aR with C5a, but no significant role in the ability of the receptor to transduce a signal and mobilize calcium in response to a small peptide agonist. Sulfation at Tyr-7 is important for CHIPS binding. Post-translationally, phosphorylated on serine residues in response to C5a binding, resulting in internalization of the receptor and short-term desensitization to C5a.

The protein localises to the cell membrane. It localises to the cytoplasmic vesicle. Receptor for the chemotactic and inflammatory peptide anaphylatoxin C5a. The ligand interacts with at least two sites on the receptor: a high-affinity site on the extracellular N-terminus, and a second site in the transmembrane region which activates downstream signaling events. Receptor activation stimulates chemotaxis, granule enzyme release, intracellular calcium release and superoxide anion production. The protein is C5a anaphylatoxin chemotactic receptor 1 (C5AR1) of Macaca mulatta (Rhesus macaque).